The primary structure comprises 239 residues: 4-hydroxy-tetrahydrodipicolinate reductase (239 aa).

NAD(+)-binding positions include Gly9 to Met14, Gly78 to Thr80, and Ala104 to Phe107. His134 acts as the Proton donor/acceptor in catalysis. Residue His135 participates in (S)-2,3,4,5-tetrahydrodipicolinate binding. Lys138 serves as the catalytic Proton donor. Position 144 to 145 (Gly144 to Thr145) interacts with (S)-2,3,4,5-tetrahydrodipicolinate.

The protein belongs to the DapB family.

The protein resides in the cytoplasm. The catalysed reaction is (S)-2,3,4,5-tetrahydrodipicolinate + NAD(+) + H2O = (2S,4S)-4-hydroxy-2,3,4,5-tetrahydrodipicolinate + NADH + H(+). It catalyses the reaction (S)-2,3,4,5-tetrahydrodipicolinate + NADP(+) + H2O = (2S,4S)-4-hydroxy-2,3,4,5-tetrahydrodipicolinate + NADPH + H(+). Its pathway is amino-acid biosynthesis; L-lysine biosynthesis via DAP pathway; (S)-tetrahydrodipicolinate from L-aspartate: step 4/4. Functionally, catalyzes the conversion of 4-hydroxy-tetrahydrodipicolinate (HTPA) to tetrahydrodipicolinate. This chain is 4-hydroxy-tetrahydrodipicolinate reductase, found in Coxiella burnetii (strain Dugway 5J108-111).